The following is a 404-amino-acid chain: uncharacterized protein (404 aa).

The segment covering 262–278 (VSTGDTSPYGTEDSSPA) has biased composition (polar residues). Disordered regions lie at residues 262–307 (VSTG…SPSL) and 320–340 (KKSHSANDSEEFFREDDGGAD). 3 positions are modified to phosphoserine: serine 268, serine 276, and serine 279. A phosphothreonine mark is found at threonine 290 and threonine 293. 5 positions are modified to phosphoserine: serine 304, serine 306, serine 324, serine 358, and serine 362. Residues 320–336 (KKSHSANDSEEFFREDD) are compositionally biased toward basic and acidic residues.

This is an uncharacterized protein from Rattus norvegicus (Rat).